Reading from the N-terminus, the 245-residue chain is Ribonuclease PH (245 aa).

Residues arginine 86 and 124 to 126 (GTR) contribute to the phosphate site.

The protein belongs to the RNase PH family. In terms of assembly, homohexameric ring arranged as a trimer of dimers.

It carries out the reaction tRNA(n+1) + phosphate = tRNA(n) + a ribonucleoside 5'-diphosphate. Its function is as follows. Phosphorolytic 3'-5' exoribonuclease that plays an important role in tRNA 3'-end maturation. Removes nucleotide residues following the 3'-CCA terminus of tRNAs; can also add nucleotides to the ends of RNA molecules by using nucleoside diphosphates as substrates, but this may not be physiologically important. Probably plays a role in initiation of 16S rRNA degradation (leading to ribosome degradation) during starvation. The polypeptide is Ribonuclease PH (Bacillus anthracis (strain A0248)).